The sequence spans 309 residues: 4-hydroxy-3-methylbut-2-enyl diphosphate reductase (309 aa).

Cysteine 12 provides a ligand contact to [4Fe-4S] cluster. (2E)-4-hydroxy-3-methylbut-2-enyl diphosphate contacts are provided by histidine 41 and histidine 74. Histidine 41 and histidine 74 together coordinate dimethylallyl diphosphate. 2 residues coordinate isopentenyl diphosphate: histidine 41 and histidine 74. Cysteine 96 serves as a coordination point for [4Fe-4S] cluster. Histidine 124 lines the (2E)-4-hydroxy-3-methylbut-2-enyl diphosphate pocket. Histidine 124 contacts dimethylallyl diphosphate. Histidine 124 is an isopentenyl diphosphate binding site. Glutamate 126 acts as the Proton donor in catalysis. Threonine 167 is a binding site for (2E)-4-hydroxy-3-methylbut-2-enyl diphosphate. Cysteine 197 contacts [4Fe-4S] cluster. Residues serine 225, serine 226, asparagine 227, and serine 269 each contribute to the (2E)-4-hydroxy-3-methylbut-2-enyl diphosphate site. 4 residues coordinate dimethylallyl diphosphate: serine 225, serine 226, asparagine 227, and serine 269. Serine 225, serine 226, asparagine 227, and serine 269 together coordinate isopentenyl diphosphate.

The protein belongs to the IspH family. Requires [4Fe-4S] cluster as cofactor.

It catalyses the reaction isopentenyl diphosphate + 2 oxidized [2Fe-2S]-[ferredoxin] + H2O = (2E)-4-hydroxy-3-methylbut-2-enyl diphosphate + 2 reduced [2Fe-2S]-[ferredoxin] + 2 H(+). The enzyme catalyses dimethylallyl diphosphate + 2 oxidized [2Fe-2S]-[ferredoxin] + H2O = (2E)-4-hydroxy-3-methylbut-2-enyl diphosphate + 2 reduced [2Fe-2S]-[ferredoxin] + 2 H(+). It participates in isoprenoid biosynthesis; dimethylallyl diphosphate biosynthesis; dimethylallyl diphosphate from (2E)-4-hydroxy-3-methylbutenyl diphosphate: step 1/1. Its pathway is isoprenoid biosynthesis; isopentenyl diphosphate biosynthesis via DXP pathway; isopentenyl diphosphate from 1-deoxy-D-xylulose 5-phosphate: step 6/6. In terms of biological role, catalyzes the conversion of 1-hydroxy-2-methyl-2-(E)-butenyl 4-diphosphate (HMBPP) into a mixture of isopentenyl diphosphate (IPP) and dimethylallyl diphosphate (DMAPP). Acts in the terminal step of the DOXP/MEP pathway for isoprenoid precursor biosynthesis. In Shewanella pealeana (strain ATCC 700345 / ANG-SQ1), this protein is 4-hydroxy-3-methylbut-2-enyl diphosphate reductase.